The chain runs to 330 residues: Aspartate--ammonia ligase (330 aa).

Belongs to the class-II aminoacyl-tRNA synthetase family. AsnA subfamily.

The protein resides in the cytoplasm. It catalyses the reaction L-aspartate + NH4(+) + ATP = L-asparagine + AMP + diphosphate + H(+). It functions in the pathway amino-acid biosynthesis; L-asparagine biosynthesis; L-asparagine from L-aspartate (ammonia route): step 1/1. The chain is Aspartate--ammonia ligase from Actinobacillus pleuropneumoniae serotype 7 (strain AP76).